A 161-amino-acid polypeptide reads, in one-letter code: Cytochrome c-type biogenesis protein CcmE (161 aa).

Over 1-8 the chain is Cytoplasmic; the sequence is MNPRRKKR. The helical; Signal-anchor for type II membrane protein transmembrane segment at 9–29 threads the bilayer; sequence LTLAVALIAGVAAVASLLLYA. Residues 30–161 lie on the Periplasmic side of the membrane; it reads LNSNLNLFYT…TYNQKALEDK (132 aa). Residues His-131 and Tyr-135 each contribute to the heme site. The tract at residues 142–161 is disordered; the sequence is EAMGQTHEKPTYNQKALEDK. The span at 147–161 shows a compositional bias: basic and acidic residues; it reads THEKPTYNQKALEDK.

The protein belongs to the CcmE/CycJ family.

It is found in the cell inner membrane. Functionally, heme chaperone required for the biogenesis of c-type cytochromes. Transiently binds heme delivered by CcmC and transfers the heme to apo-cytochromes in a process facilitated by CcmF and CcmH. The chain is Cytochrome c-type biogenesis protein CcmE from Shewanella frigidimarina (strain NCIMB 400).